The chain runs to 82 residues: Small ribosomal subunit protein bS16 (82 aa).

Belongs to the bacterial ribosomal protein bS16 family.

The polypeptide is Small ribosomal subunit protein bS16 (Microcystis aeruginosa (strain NIES-843 / IAM M-2473)).